A 401-amino-acid polypeptide reads, in one-letter code: MIVQDSVCSELMRGCEEILPVPELEKKLQKGIPLKIKAGFDPTAPDLHLGHTVLLNKLRQFQQFGHEVIFLIGDFTAMIGDPTGKNVTRMPLSQETVLENAKTYQHQVFKILDPDKTTVAFNSQWLNKFNAVDLIRLAATHTVARMLERDDFNKRYTTGQPIAIHEFLYPLLQGYDSVALKADVELGGTDQKFNLLMGRELQKHYGFEPQVVMMTPLIEGLDGVKKMSKSLDNYIGINETPEQIFGKIMSVSDELMWRYIDLLSFKTGKEIQQLKQSVLEGKNPRDVKIDFAKEIVARFHDQTQAELAHNNFIERFQKGNIPEDLEELSLVIVEPIALAQLLKQIDLTASTSESIRMVKQGAVKVDGDKISDPSLKLPIGKSYIIQVGKRRIAKLSIQQAD.

A 'HIGH' region motif is present at residues 42-51 (PTAPDLHLGH). Positions 226–230 (KMSKS) match the 'KMSKS' region motif. Residue Lys-229 participates in ATP binding. The 62-residue stretch at 336–397 (IALAQLLKQI…GKRRIAKLSI (62 aa)) folds into the S4 RNA-binding domain.

Belongs to the class-I aminoacyl-tRNA synthetase family. TyrS type 2 subfamily. Homodimer.

Its subcellular location is the cytoplasm. It carries out the reaction tRNA(Tyr) + L-tyrosine + ATP = L-tyrosyl-tRNA(Tyr) + AMP + diphosphate + H(+). In terms of biological role, catalyzes the attachment of tyrosine to tRNA(Tyr) in a two-step reaction: tyrosine is first activated by ATP to form Tyr-AMP and then transferred to the acceptor end of tRNA(Tyr). In Legionella pneumophila (strain Paris), this protein is Tyrosine--tRNA ligase.